Here is a 173-residue protein sequence, read N- to C-terminus: Alpha-crystallin A chain (173 aa).

Met-1 is modified (N-acetylmethionine). A required for complex formation with BFSP1 and BFSP2 region spans residues 1–63 (MDVTIQHPWF…RTVLDSGVSE (63 aa)). At Gln-6 the chain carries Deamidated glutamine; partial. A Phosphoserine modification is found at Ser-45. Gln-50 carries the post-translational modification Deamidated glutamine; partial. The sHSP domain occupies 52-162 (LFRTVLDSGV…GHSERAIPVS (111 aa)). N6-acetyllysine is present on Lys-70. Gln-90 is modified (deamidated glutamine; partial). At Lys-99 the chain carries N6-acetyllysine. His-100 is a binding site for Zn(2+). Asn-101 carries the deamidated asparagine; partial modification. Residues Glu-102 and His-107 each contribute to the Zn(2+) site. Ser-122 carries the post-translational modification Phosphoserine. Position 123 is a deamidated asparagine; partial (Asn-123). Residues 144–173 (PKVQSGLDAGHSERAIPVSREEKPSSAPSS) form a disordered region. At Gln-147 the chain carries Deamidated glutamine; partial. The span at 153–167 (GHSERAIPVSREEKP) shows a compositional bias: basic and acidic residues. His-154 contacts Zn(2+). Ser-162 is a glycosylation site (O-linked (GlcNAc) serine).

The protein belongs to the small heat shock protein (HSP20) family. In terms of assembly, heteromer composed of three CRYAA and one CRYAB subunits. Inter-subunit bridging via zinc ions enhances stability, which is crucial as there is no protein turn over in the lens. Can also form homodimers and homotetramers (dimers of dimers) which serve as the building blocks of homooligomers. Within homooligomers, the zinc-binding motif is created from residues of 3 different molecules. His-100 and Glu-102 from one molecule are ligands of the zinc ion, and His-107 and His-154 residues from additional molecules complete the site with tetrahedral coordination geometry. Part of a complex required for lens intermediate filament formation composed of BFSP1, BFSP2 and CRYAA. Post-translationally, acetylation at Lys-70 may increase chaperone activity. In terms of processing, undergoes age-dependent proteolytical cleavage at the C-terminus.

It is found in the cytoplasm. Its subcellular location is the nucleus. Contributes to the transparency and refractive index of the lens. Acts as a chaperone, preventing aggregation of various proteins under a wide range of stress conditions. Required for the correct formation of lens intermediate filaments as part of a complex composed of BFSP1, BFSP2 and CRYAA. The protein is Alpha-crystallin A chain (CRYAA) of Otolemur crassicaudatus (Brown greater galago).